A 171-amino-acid chain; its full sequence is tRNA-specific adenosine deaminase (171 aa).

In terms of domain architecture, CMP/dCMP-type deaminase spans 6-133; it reads EEQTYFMQEA…ERLNHRVQVE (128 aa). Residue His57 participates in Zn(2+) binding. Catalysis depends on Glu59, which acts as the Proton donor. Residues Cys87 and Cys90 each coordinate Zn(2+).

This sequence belongs to the cytidine and deoxycytidylate deaminase family. As to quaternary structure, homodimer. Zn(2+) is required as a cofactor.

It catalyses the reaction adenosine(34) in tRNA + H2O + H(+) = inosine(34) in tRNA + NH4(+). Its function is as follows. Catalyzes the deamination of adenosine to inosine at the wobble position 34 of tRNA(Arg2). The chain is tRNA-specific adenosine deaminase from Streptococcus pyogenes serotype M3 (strain ATCC BAA-595 / MGAS315).